The following is a 210-amino-acid chain: Urease accessory protein UreF (210 aa).

The protein belongs to the UreF family. As to quaternary structure, ureD, UreF and UreG form a complex that acts as a GTP-hydrolysis-dependent molecular chaperone, activating the urease apoprotein by helping to assemble the nickel containing metallocenter of UreC. The UreE protein probably delivers the nickel.

The protein resides in the cytoplasm. In terms of biological role, required for maturation of urease via the functional incorporation of the urease nickel metallocenter. The chain is Urease accessory protein UreF from Cereibacter sphaeroides (strain KD131 / KCTC 12085) (Rhodobacter sphaeroides).